The following is a 248-amino-acid chain: Adenosylcobinamide-GDP ribazoletransferase (248 aa).

The next 7 helical transmembrane spans lie at 24 to 44 (EINLKKGSALLPFVGVIIGAW), 70 to 90 (IIITGGFHVDALADTADGLFS), 106 to 126 (VGANGVIAICFYFLFYGALFL), 134 to 154 (IGWLFFVLPIVAKGVTMLLFA), 168 to 188 (IFLGVPWWPIVIAQVIVLVAL), 189 to 209 (GAFFSYIGVIAYAGVILFTII), and 228 to 248 (AGGQMGQLICLFCLVLLWGLI).

It belongs to the CobS family. Requires Mg(2+) as cofactor.

The protein localises to the cell membrane. The enzyme catalyses alpha-ribazole + adenosylcob(III)inamide-GDP = adenosylcob(III)alamin + GMP + H(+). It carries out the reaction alpha-ribazole 5'-phosphate + adenosylcob(III)inamide-GDP = adenosylcob(III)alamin 5'-phosphate + GMP + H(+). Its pathway is cofactor biosynthesis; adenosylcobalamin biosynthesis; adenosylcobalamin from cob(II)yrinate a,c-diamide: step 7/7. Functionally, joins adenosylcobinamide-GDP and alpha-ribazole to generate adenosylcobalamin (Ado-cobalamin). Also synthesizes adenosylcobalamin 5'-phosphate from adenosylcobinamide-GDP and alpha-ribazole 5'-phosphate. The chain is Adenosylcobinamide-GDP ribazoletransferase from Listeria monocytogenes serotype 4a (strain HCC23).